Here is a 421-residue protein sequence, read N- to C-terminus: Thymidine phosphorylase (421 aa).

The protein belongs to the thymidine/pyrimidine-nucleoside phosphorylase family. In terms of assembly, homodimer.

It carries out the reaction thymidine + phosphate = 2-deoxy-alpha-D-ribose 1-phosphate + thymine. Functionally, the enzymes which catalyze the reversible phosphorolysis of pyrimidine nucleosides are involved in the degradation of these compounds and in their utilization as carbon and energy sources, or in the rescue of pyrimidine bases for nucleotide synthesis. This chain is Thymidine phosphorylase (deoA), found in Mycoplasma genitalium (strain ATCC 33530 / DSM 19775 / NCTC 10195 / G37) (Mycoplasmoides genitalium).